We begin with the raw amino-acid sequence, 20 residues long: Cytolysin tenebrosin-A (20 aa).

The interval 3–12 (AVAGAVIEGA) is plays an important role in the hemolytic activity. The interval 11–20 (GATLTFEVLQ) is N-terminal region.

It belongs to the actinoporin family. Sea anemone subfamily. In terms of assembly, octamer or nonamer in membranes. Monomer in the soluble state.

The protein localises to the secreted. Its subcellular location is the nematocyst. It is found in the target cell membrane. In terms of biological role, pore-forming protein that forms cations-selective hydrophilic pores of around 1 nm and causes cardiac stimulation and cytolysis. Pore formation is a multi-step process that involves specific recognition of membrane sphingomyelin (but neither cholesterol nor phosphatidylcholine) using aromatic rich region and adjacent phosphocholine (POC) binding site, firm binding to the membrane (mainly driven by hydrophobic interactions) accompanied by the transfer of the N-terminal region to the lipid-water interface and finally pore formation after oligomerization of monomers. The protein is Cytolysin tenebrosin-A of Actinia tenebrosa (Australian red waratah sea anemone).